A 539-amino-acid chain; its full sequence is Phosphoenolpyruvate carboxykinase (ATP) (539 aa).

Substrate-binding residues include arginine 64, tyrosine 206, and lysine 212. Residues lysine 212, histidine 231, and 247–255 (GLSGTGKTT) contribute to the ATP site. The Mn(2+) site is built by lysine 212 and histidine 231. Residue aspartate 268 coordinates Mn(2+). ATP is bound by residues glutamate 296, arginine 332, 448 to 449 (RI), and threonine 454. Arginine 332 is a binding site for substrate.

This sequence belongs to the phosphoenolpyruvate carboxykinase (ATP) family. Monomer. It depends on Mn(2+) as a cofactor.

It localises to the cytoplasm. The enzyme catalyses oxaloacetate + ATP = phosphoenolpyruvate + ADP + CO2. Its pathway is carbohydrate biosynthesis; gluconeogenesis. Its function is as follows. Involved in the gluconeogenesis. Catalyzes the conversion of oxaloacetate (OAA) to phosphoenolpyruvate (PEP) through direct phosphoryl transfer between the nucleoside triphosphate and OAA. This Salmonella agona (strain SL483) protein is Phosphoenolpyruvate carboxykinase (ATP).